We begin with the raw amino-acid sequence, 605 residues long: Probable potassium transport system protein Kup (605 aa).

A run of 12 helical transmembrane segments spans residues 18–38 (GLVF…IIAL), 46–66 (ILGI…LEYA), 97–117 (MAFV…DGVI), 138–158 (GLSQ…LFVF), 169–189 (AFGP…AISV), 204–224 (AISF…EVIL), 247–267 (AWYF…AFII), 287–307 (FYIP…QALI), 339–359 (IYIG…MLVF), 368–388 (AYGF…TMIF), 395–415 (WKVP…VSNC), and 418–438 (LPHG…VILI).

The protein belongs to the HAK/KUP transporter (TC 2.A.72) family.

Its subcellular location is the cell inner membrane. The catalysed reaction is K(+)(in) + H(+)(in) = K(+)(out) + H(+)(out). In terms of biological role, transport of potassium into the cell. Likely operates as a K(+):H(+) symporter. The polypeptide is Probable potassium transport system protein Kup (Pelobacter propionicus (strain DSM 2379 / NBRC 103807 / OttBd1)).